We begin with the raw amino-acid sequence, 132 residues long: Fluoride-specific ion channel FluC 1 (132 aa).

A run of 4 helical transmembrane segments spans residues 11 to 31 (AVFA…ALAI), 37 to 57 (WPWP…YFTT), 70 to 92 (RPLL…VETI), and 105 to 125 (AYSV…TVLV). Na(+)-binding residues include Gly-79 and Thr-82.

Belongs to the fluoride channel Fluc/FEX (TC 1.A.43) family.

It is found in the cell membrane. The catalysed reaction is fluoride(in) = fluoride(out). Its activity is regulated as follows. Na(+) is not transported, but it plays an essential structural role and its presence is essential for fluoride channel function. In terms of biological role, fluoride-specific ion channel. Important for reducing fluoride concentration in the cell, thus reducing its toxicity. This chain is Fluoride-specific ion channel FluC 1, found in Mycobacterium bovis (strain ATCC BAA-935 / AF2122/97).